Here is an 861-residue protein sequence, read N- to C-terminus: DNA mismatch repair protein MutS (861 aa).

Residue 616 to 623 (GPNMGGKS) participates in ATP binding.

It belongs to the DNA mismatch repair MutS family.

This protein is involved in the repair of mismatches in DNA. It is possible that it carries out the mismatch recognition step. This protein has a weak ATPase activity. This chain is DNA mismatch repair protein MutS, found in Haemophilus influenzae (strain 86-028NP).